The sequence spans 178 residues: RNA replicase polyprotein (178 aa).

Belongs to the tymovirus NS35 RNA replicase polyprotein family.

It carries out the reaction RNA(n) + a ribonucleoside 5'-triphosphate = RNA(n+1) + diphosphate. The polypeptide is RNA replicase polyprotein (Physalis heterophylla (PhMV)).